A 316-amino-acid chain; its full sequence is MAKKTVGLLVMAYGTPYKEDDIERYYTHIRHGRKPPQEQIDDLKARYRAIGGLSPLAKITEAQAKQLEKRLNEMQDEVEFCMYLGLKHIEPFIEDAVERMHADGVKEAVAIVLAPHYSTFSICSYNERAKAAAEKLGGPVIYTIDQWYDEPKFLQYWSEKVKAIFDAMKEREREQAVLIVSAHSLPEKIIQAGDPYPAQLEDTAKRIAEQAGVTHYAVGWQSAGNTPEPWLGPDVQDLTRQLHDEQGYTSFVYAPVGFVADHLEVLYDNDIECKQVTEEIGARYYRPEMPNTDPLFIDALATVVLKRLAKEGDEHE.

Fe-coproporphyrin III is bound by residues tyrosine 13, arginine 30, 46-47 (RY), serine 54, and tyrosine 125. Fe(2+)-binding residues include histidine 183 and glutamate 264.

The protein belongs to the ferrochelatase family.

It is found in the cytoplasm. It catalyses the reaction Fe-coproporphyrin III + 2 H(+) = coproporphyrin III + Fe(2+). Its pathway is porphyrin-containing compound metabolism; protoheme biosynthesis. Its function is as follows. Involved in coproporphyrin-dependent heme b biosynthesis. Catalyzes the insertion of ferrous iron into coproporphyrin III to form Fe-coproporphyrin III. This Geobacillus thermodenitrificans (strain NG80-2) protein is Coproporphyrin III ferrochelatase.